The sequence spans 506 residues: Galactose/methyl galactoside import ATP-binding protein MglA (506 aa).

ABC transporter domains lie at 14–249 and 264–506; these read LEMS…VGRS and VILE…SLHL. Position 46–53 (46–53) interacts with ATP; it reads GENGAGKS.

The protein belongs to the ABC transporter superfamily. Galactose/methyl galactoside importer (TC 3.A.1.2.3) family. The complex is composed of one ATP-binding protein (MglA), two transmembrane proteins (MglC) and a solute-binding protein (MglB).

Its subcellular location is the cell inner membrane. It catalyses the reaction D-galactose(out) + ATP + H2O = D-galactose(in) + ADP + phosphate + H(+). The catalysed reaction is methyl beta-D-galactoside(out) + ATP + H2O = methyl beta-D-galactoside(in) + ADP + phosphate + H(+). Functionally, part of the ABC transporter complex MglABC involved in galactose/methyl galactoside import. Responsible for energy coupling to the transport system. The protein is Galactose/methyl galactoside import ATP-binding protein MglA of Yersinia pestis bv. Antiqua (strain Antiqua).